The following is a 454-amino-acid chain: Ribosomal protein uS12 methylthiotransferase RimO (454 aa).

The region spanning 14-125 (SKVAFSHVGC…IAKVLDRVEQ (112 aa)) is the MTTase N-terminal domain. [4Fe-4S] cluster is bound by residues cysteine 23, cysteine 59, cysteine 88, cysteine 163, cysteine 167, and cysteine 170. Residues 149–378 (DKNKFVAYLR…ISVQQNISKD (230 aa)) enclose the Radical SAM core domain. One can recognise a TRAM domain in the interval 381–452 (QTYVGSKMKI…EYDLYGEIIK (72 aa)).

This sequence belongs to the methylthiotransferase family. RimO subfamily. [4Fe-4S] cluster is required as a cofactor.

The protein resides in the cytoplasm. The catalysed reaction is L-aspartate(89)-[ribosomal protein uS12]-hydrogen + (sulfur carrier)-SH + AH2 + 2 S-adenosyl-L-methionine = 3-methylsulfanyl-L-aspartate(89)-[ribosomal protein uS12]-hydrogen + (sulfur carrier)-H + 5'-deoxyadenosine + L-methionine + A + S-adenosyl-L-homocysteine + 2 H(+). Catalyzes the methylthiolation of an aspartic acid residue of ribosomal protein uS12. This is Ribosomal protein uS12 methylthiotransferase RimO from Prochlorococcus marinus (strain AS9601).